The primary structure comprises 236 residues: Small ribosomal subunit protein uS3 (236 aa).

The KH type-2 domain maps to 39–107 (IRKFLKREMY…EVFINIKEAK (69 aa)). Over residues 214 to 229 (PEKKEESKSGDKEVRS) the composition is skewed to basic and acidic residues. The interval 214-236 (PEKKEESKSGDKEVRSKSRRGRQ) is disordered.

This sequence belongs to the universal ribosomal protein uS3 family. As to quaternary structure, part of the 30S ribosomal subunit. Forms a tight complex with proteins S10 and S14.

In terms of biological role, binds the lower part of the 30S subunit head. Binds mRNA in the 70S ribosome, positioning it for translation. This Helicobacter hepaticus (strain ATCC 51449 / 3B1) protein is Small ribosomal subunit protein uS3.